We begin with the raw amino-acid sequence, 130 residues long: uncharacterized protein (130 aa).

Residues 1–100 (MSSNSDNTEC…AEPDAAKEEP (100 aa)) are disordered. Basic and acidic residues-rich tracts occupy residues 57–75 (YTTR…KMMD) and 91–100 (AEPDAAKEEP).

This is an uncharacterized protein from Equine herpesvirus 1 (strain Ab4p) (EHV-1).